A 757-amino-acid polypeptide reads, in one-letter code: Mitofusin-2 (757 aa).

Over 1-604 (MSLLFSRCNS…TQEELMVSMV (604 aa)) the chain is Cytoplasmic. The interval 30–94 (KHFVTAKKKI…VRGISEVLAR (65 aa)) is part of a helix bundle domain, formed by helices from N-terminal and C-terminal regions. Residues 93–342 (ARRHMKVAFF…VRMFEFQNFE (250 aa)) form the Dynamin-type G domain. The G1 motif stretch occupies residues 103-110 (GRTSNGKS). A GTP-binding site is contributed by 106 to 111 (SNGKST). Phosphothreonine; by PINK1 is present on T111. The interval 129 to 130 (TT) is G2 motif. The segment at 199–202 (DSPG) is G3 motif. Residue 258–261 (NRWD) participates in GTP binding. The tract at residues 258–261 (NRWD) is G4 motif. E288 is a region of interest (G5 motif). GTP is bound by residues S305 and K307. Residues 359-385 (EQHTVRAKQIAEAVRLIMDSLHIAAQE) form a part of a helix bundle domain, formed by helices from N-terminal and C-terminal regions region. A coiled-coil region spans residues 406-434 (KQLELLAQDYKLRIKQITEEVERQVSTAM). S442 is modified (phosphoserine). A helical transmembrane segment spans residues 605–625 (TGLASLTSRTSMGILVVGGVV). W626 is a topological domain (mitochondrial intermembrane). Residues 627–647 (KAVGWRLIALSFGLYGLLYVY) form a helical membrane-spanning segment. Residues 648-757 (ERLTWTTKAK…FTHQYLQPSR (110 aa)) are Cytoplasmic-facing. Positions 696-738 (FAHLCQQVDITRDNLEQEIAAMNKKVEALDSLQSRAKLLRNKA) form a coiled coil. Positions 722–753 (EALDSLQSRAKLLRNKAGWLDSELNMFTHQYL) are part of a helix bundle domain, formed by helices from N-terminal and C-terminal regions.

This sequence belongs to the TRAFAC class dynamin-like GTPase superfamily. Dynamin/Fzo/YdjA family. Mitofusin subfamily. In terms of assembly, forms homomultimers and heteromultimers with MFN1. Oligomerization is essential for mitochondrion fusion. Interacts with VAT1. Interacts with STOML2; may form heterooligomers. Interacts (phosphorylated) with PRKN. Interacts with EIF2AK3. Interacts with THG1L; THG1L probably functions as a guanyl-nucleotide exchange factor/GEF, activating MFN2. Post-translationally, phosphorylated by PINK1. In terms of processing, ubiquitinated by non-degradative ubiquitin by PRKN, promoting mitochondrial fusion; deubiquitination by USP30 inhibits mitochondrial fusion. Ubiquitinated by HUWE1 when dietary stearate (C18:0) levels are low; ubiquitination inhibits mitochondrial fusion. In terms of tissue distribution, ubiquitous. Expression is markedly reduced in ApoE-knockout mouse atherosclerotic arteries.

Its subcellular location is the mitochondrion outer membrane. The catalysed reaction is GTP + H2O = GDP + phosphate + H(+). In terms of biological role, mitochondrial outer membrane GTPase that mediates mitochondrial clustering and fusion. Mitochondria are highly dynamic organelles, and their morphology is determined by the equilibrium between mitochondrial fusion and fission events. Overexpression induces the formation of mitochondrial networks. Membrane clustering requires GTPase activity and may involve a major rearrangement of the coiled coil domains. Plays a central role in mitochondrial metabolism and may be associated with obesity and/or apoptosis processes. Plays an important role in the regulation of vascular smooth muscle cell proliferation. Involved in the clearance of damaged mitochondria via selective autophagy (mitophagy). Is required for PRKN recruitment to dysfunctional mitochondria. Involved in the control of unfolded protein response (UPR) upon ER stress including activation of apoptosis and autophagy during ER stress. Acts as an upstream regulator of EIF2AK3 and suppresses EIF2AK3 activation under basal conditions. The sequence is that of Mitofusin-2 (Mfn2) from Mus musculus (Mouse).